Here is a 146-residue protein sequence, read N- to C-terminus: Basic phospholipase A2 beta-bungarotoxin A2 chain (146 aa).

Residues 1-19 (MNPAHLLVLSAVCVSLLGA) form the signal peptide. Positions 20 to 27 (SNIPPQSL) are excised as a propeptide. Disulfide bonds link C54–C145, C56–C72, C71–C126, C78–C119, C87–C112, and C105–C117. Residues Y55, G57, and G59 each contribute to the Ca(2+) site. Residue H75 is part of the active site. Residue D76 participates in Ca(2+) binding. Residue D120 is part of the active site.

The protein belongs to the phospholipase A2 family. Group I subfamily. D49 sub-subfamily. Heterodimer; disulfide-linked. The A chain has phospholipase A2 activity and the B chain shows homology with the basic protease inhibitors. Ca(2+) serves as cofactor. As to expression, expressed by the venom gland.

Its subcellular location is the secreted. The enzyme catalyses a 1,2-diacyl-sn-glycero-3-phosphocholine + H2O = a 1-acyl-sn-glycero-3-phosphocholine + a fatty acid + H(+). Functionally, snake venom phospholipase A2 (PLA2) that inhibits neuromuscular transmission by blocking acetylcholine release from the nerve termini. PLA2 catalyzes the calcium-dependent hydrolysis of the 2-acyl groups in 3-sn-phosphoglycerides. This chain is Basic phospholipase A2 beta-bungarotoxin A2 chain, found in Bungarus flaviceps flaviceps (Red-headed krait).